Here is a 311-residue protein sequence, read N- to C-terminus: Probable manganese-dependent inorganic pyrophosphatase (311 aa).

Mn(2+) contacts are provided by histidine 9, aspartate 13, aspartate 15, aspartate 77, histidine 99, and aspartate 151.

Belongs to the PPase class C family. Requires Mn(2+) as cofactor.

Its subcellular location is the cytoplasm. It catalyses the reaction diphosphate + H2O = 2 phosphate + H(+). This is Probable manganese-dependent inorganic pyrophosphatase from Streptococcus equi subsp. equi (strain 4047).